The following is a 140-amino-acid chain: Large ribosomal subunit protein uL14 (140 aa).

Belongs to the universal ribosomal protein uL14 family.

This chain is Large ribosomal subunit protein uL14 (RPL23), found in Brugia malayi (Filarial nematode worm).